Reading from the N-terminus, the 876-residue chain is Alanine--tRNA ligase (876 aa).

At Lys74 the chain carries N6-acetyllysine. Residues His564, His568, Cys666, and His670 each contribute to the Zn(2+) site.

This sequence belongs to the class-II aminoacyl-tRNA synthetase family. As to quaternary structure, homotetramer. Zn(2+) serves as cofactor.

Its subcellular location is the cytoplasm. The enzyme catalyses tRNA(Ala) + L-alanine + ATP = L-alanyl-tRNA(Ala) + AMP + diphosphate. Its function is as follows. Catalyzes the attachment of alanine to tRNA(Ala) in a two-step reaction: alanine is first activated by ATP to form Ala-AMP and then transferred to the acceptor end of tRNA(Ala). Also edits incorrectly charged Ser-tRNA(Ala) and Gly-tRNA(Ala) via its editing domain. This Shigella flexneri serotype 5b (strain 8401) protein is Alanine--tRNA ligase.